The chain runs to 333 residues: HTH-type transcriptional regulator Cphy_2742 (333 aa).

An HTH lacI-type domain is found at 1–55 (MNIYDVSQKAGVSIATVSRVINGNPNVSEKTKQKVLDVMKEIGYTPNVFARGLGL). Residues 3–22 (IYDVSQKAGVSIATVSRVIN) constitute a DNA-binding region (H-T-H motif).

Its subcellular location is the cytoplasm. Involved in control of pectin and galacturonic acid metabolism. Probably represses a comprehensive set of pectin fermentation genes by binding a conserved palindrome at or downstream of their transcription start site to block transcription. In the presence of galacturonic acid may activate transcription of acetate synthesis and other aspects of carbon metabolism. The chain is HTH-type transcriptional regulator Cphy_2742 from Lachnoclostridium phytofermentans (strain ATCC 700394 / DSM 18823 / ISDg) (Clostridium phytofermentans).